Consider the following 124-residue polypeptide: S-adenosylmethionine decarboxylase proenzyme (124 aa).

Ser71 serves as the catalytic Schiff-base intermediate with substrate; via pyruvic acid. At Ser71 the chain carries Pyruvic acid (Ser); by autocatalysis. The active-site Proton acceptor; for processing activity is the His76. The Proton donor; for catalytic activity role is filled by Cys91.

This sequence belongs to the prokaryotic AdoMetDC family. Type 1 subfamily. Heterotetramer of two alpha and two beta chains arranged as a dimer of alpha/beta heterodimers. The cofactor is pyruvate. Is synthesized initially as an inactive proenzyme. Formation of the active enzyme involves a self-maturation process in which the active site pyruvoyl group is generated from an internal serine residue via an autocatalytic post-translational modification. Two non-identical subunits are generated from the proenzyme in this reaction, and the pyruvate is formed at the N-terminus of the alpha chain, which is derived from the carboxyl end of the proenzyme. The post-translation cleavage follows an unusual pathway, termed non-hydrolytic serinolysis, in which the side chain hydroxyl group of the serine supplies its oxygen atom to form the C-terminus of the beta chain, while the remainder of the serine residue undergoes an oxidative deamination to produce ammonia and the pyruvoyl group blocking the N-terminus of the alpha chain.

It catalyses the reaction S-adenosyl-L-methionine + H(+) = S-adenosyl 3-(methylsulfanyl)propylamine + CO2. Its pathway is amine and polyamine biosynthesis; S-adenosylmethioninamine biosynthesis; S-adenosylmethioninamine from S-adenosyl-L-methionine: step 1/1. Its activity is regulated as follows. Competitively inhibited by methylglyoxal bis-guanylhydrazone. Irreversibly inhibited by NaBH(4) in vitro. Functionally, catalyzes the decarboxylation of S-adenosylmethionine to S-adenosylmethioninamine (dcAdoMet), the propylamine donor required for the synthesis of the polyamines spermine and spermidine from the diamine putrescine. Has no arginine decarboxylase (ArgDC) activity. In Saccharolobus solfataricus (strain ATCC 35092 / DSM 1617 / JCM 11322 / P2) (Sulfolobus solfataricus), this protein is S-adenosylmethionine decarboxylase proenzyme (speH).